The primary structure comprises 311 residues: Very-long-chain 3-oxoacyl-CoA reductase-B (311 aa).

Residues 8-28 traverse the membrane as a helical segment; that stretch reads LFWVGAVTVLWLSVSSLWSLI. 48–77 is an NADP(+) binding site; the sequence is GKWAVVTGATDGIGKAYAEELARRGFAIVL. The helical transmembrane segment at 125 to 145 threads the bilayer; sequence IGVLVNNVGVSYSYPEFFLNI. S187 contributes to the substrate binding site. The Proton acceptor role is filled by Y200. The helical transmembrane segment at 269-289 threads the bilayer; sequence GYLPHAIMGWVTASLLPAKLL.

The protein belongs to the short-chain dehydrogenases/reductases (SDR) family. 17-beta-HSD 3 subfamily.

The protein localises to the endoplasmic reticulum membrane. It carries out the reaction a very-long-chain (3R)-3-hydroxyacyl-CoA + NADP(+) = a very-long-chain 3-oxoacyl-CoA + NADPH + H(+). The catalysed reaction is 17beta-estradiol + NAD(+) = estrone + NADH + H(+). It catalyses the reaction 17beta-estradiol + NADP(+) = estrone + NADPH + H(+). Its pathway is lipid metabolism; fatty acid biosynthesis. It functions in the pathway steroid biosynthesis; estrogen biosynthesis. Its function is as follows. Catalyzes the second of the four reactions of the long-chain fatty acids elongation cycle. This endoplasmic reticulum-bound enzymatic process, allows the addition of two carbons to the chain of long- and very long-chain fatty acids/VLCFAs per cycle. This enzyme has a 3-ketoacyl-CoA reductase activity, reducing 3-ketoacyl-CoA to 3-hydroxyacyl-CoA, within each cycle of fatty acid elongation. Thereby, it may participate in the production of VLCFAs of different chain lengths that are involved in multiple biological processes as precursors of membrane lipids and lipid mediators. May also catalyze the transformation of estrone (E1) into estradiol (E2) and play a role in estrogen formation. This Danio rerio (Zebrafish) protein is Very-long-chain 3-oxoacyl-CoA reductase-B (hsd17b12b).